The primary structure comprises 367 residues: Queuine tRNA-ribosyltransferase (367 aa).

Residue aspartate 89 is the Proton acceptor of the active site. Residues 89 to 93, aspartate 143, glutamine 187, and glycine 214 each bind substrate; that span reads DSGGF. An RNA binding region spans residues 245-251; the sequence is GVGTPAD. Aspartate 264 acts as the Nucleophile in catalysis. Positions 269–273 are RNA binding; important for wobble base 34 recognition; sequence TRNAR. Cysteine 302, cysteine 304, cysteine 307, and histidine 333 together coordinate Zn(2+).

It belongs to the queuine tRNA-ribosyltransferase family. In terms of assembly, homodimer. Within each dimer, one monomer is responsible for RNA recognition and catalysis, while the other monomer binds to the replacement base PreQ1. Zn(2+) is required as a cofactor.

It carries out the reaction 7-aminomethyl-7-carbaguanine + guanosine(34) in tRNA = 7-aminomethyl-7-carbaguanosine(34) in tRNA + guanine. The protein operates within tRNA modification; tRNA-queuosine biosynthesis. Functionally, catalyzes the base-exchange of a guanine (G) residue with the queuine precursor 7-aminomethyl-7-deazaguanine (PreQ1) at position 34 (anticodon wobble position) in tRNAs with GU(N) anticodons (tRNA-Asp, -Asn, -His and -Tyr). Catalysis occurs through a double-displacement mechanism. The nucleophile active site attacks the C1' of nucleotide 34 to detach the guanine base from the RNA, forming a covalent enzyme-RNA intermediate. The proton acceptor active site deprotonates the incoming PreQ1, allowing a nucleophilic attack on the C1' of the ribose to form the product. After dissociation, two additional enzymatic reactions on the tRNA convert PreQ1 to queuine (Q), resulting in the hypermodified nucleoside queuosine (7-(((4,5-cis-dihydroxy-2-cyclopenten-1-yl)amino)methyl)-7-deazaguanosine). The protein is Queuine tRNA-ribosyltransferase of Nitrosospira multiformis (strain ATCC 25196 / NCIMB 11849 / C 71).